Here is a 576-residue protein sequence, read N- to C-terminus: V-type ATP synthase alpha chain (576 aa).

238–245 (GPFGAGKT) is an ATP binding site.

It belongs to the ATPase alpha/beta chains family.

The catalysed reaction is ATP + H2O + 4 H(+)(in) = ADP + phosphate + 5 H(+)(out). Its function is as follows. Produces ATP from ADP in the presence of a proton gradient across the membrane. The V-type alpha chain is a catalytic subunit. In Borrelia turicatae (strain 91E135), this protein is V-type ATP synthase alpha chain.